A 390-amino-acid polypeptide reads, in one-letter code: Methylthioribose-1-phosphate isomerase (390 aa).

Asp258 (proton donor) is an active-site residue.

The protein belongs to the eIF-2B alpha/beta/delta subunits family. MtnA subfamily.

The protein localises to the cytoplasm. It is found in the nucleus. The catalysed reaction is 5-(methylsulfanyl)-alpha-D-ribose 1-phosphate = 5-(methylsulfanyl)-D-ribulose 1-phosphate. It participates in amino-acid biosynthesis; L-methionine biosynthesis via salvage pathway; L-methionine from S-methyl-5-thio-alpha-D-ribose 1-phosphate: step 1/6. Catalyzes the interconversion of methylthioribose-1-phosphate (MTR-1-P) into methylthioribulose-1-phosphate (MTRu-1-P). This chain is Methylthioribose-1-phosphate isomerase, found in Coccidioides posadasii (strain C735) (Valley fever fungus).